We begin with the raw amino-acid sequence, 266 residues long: MPNITVTSLLAMKQKGEKITMLTCYDATFAHTASQAGVEVLLIGDSLGMVLQGHDSTLPVTTAETAYHVACVKRGNQGAMILADLPFMANATLEQTFINSATLMQAGAHMIKVEGAAWLGESIRLLAERGIPVCAHMGLTPQAVNVLGGYKVQGRLEAQARQMRADAIALEQAGAAMILLECVPSELAEEITQAVKIPVIGIGAGSATDGQVLVLHDMLGLSISGRVPKFVKNFMTGQPDIQSAIRAYVAAVKDVSFPATEHGFSA.

2 residues coordinate Mg(2+): D45 and D84. 3-methyl-2-oxobutanoate is bound by residues 45–46 (DS), D84, and K112. E114 contacts Mg(2+). E181 acts as the Proton acceptor in catalysis.

It belongs to the PanB family. In terms of assembly, homodecamer; pentamer of dimers. Mg(2+) serves as cofactor.

It localises to the cytoplasm. The catalysed reaction is 3-methyl-2-oxobutanoate + (6R)-5,10-methylene-5,6,7,8-tetrahydrofolate + H2O = 2-dehydropantoate + (6S)-5,6,7,8-tetrahydrofolate. It participates in cofactor biosynthesis; (R)-pantothenate biosynthesis; (R)-pantoate from 3-methyl-2-oxobutanoate: step 1/2. Functionally, catalyzes the reversible reaction in which hydroxymethyl group from 5,10-methylenetetrahydrofolate is transferred onto alpha-ketoisovalerate to form ketopantoate. The polypeptide is 3-methyl-2-oxobutanoate hydroxymethyltransferase (Pseudomonas savastanoi pv. phaseolicola (strain 1448A / Race 6) (Pseudomonas syringae pv. phaseolicola (strain 1448A / Race 6))).